The chain runs to 1157 residues: Cyclin-dependent kinase 12 (1157 aa).

The interval 15–540 (SDVSSEDFSD…RSPTSRDLKH (526 aa)) is disordered. Acidic residues predominate over residues 18-32 (SSEDFSDQEAGDLDA). A compositionally biased stretch (basic and acidic residues) spans 55 to 76 (GRLDAKPDKEGYDNYRSRRAED). A compositionally biased stretch (polar residues) spans 85–94 (SRQTSSSEAT). T106 bears the Phosphothreonine mark. Basic residues predominate over residues 134–162 (RQKRKKQKKEKHKHKSKKKSKKRKKKRAK). Positions 163–176 (SYSSIDSMSDNDIN) are enriched in low complexity. T184 carries the phosphothreonine modification. Over residues 189 to 215 (PSKSNERTVSAAPSSFTPHNLKESSSP) the composition is skewed to polar residues. Residues S190 and S192 each carry the phosphoserine modification. T217 carries the post-translational modification Phosphothreonine. Over residues 224-255 (PNTNSNYYGESSLETANSALGSNLQVTVTNKQ) the composition is skewed to polar residues. Residues 256–281 (SISNRLRSPPPSSRSSGNGPRFGNSP) show a composition bias toward low complexity. Phosphoserine is present on S280. T283 bears the Phosphothreonine mark. A phosphoserine mark is found at S291, S301, and S314. Positions 315–332 (PHKEDVSAHHRSSHDHGY) are enriched in basic and acidic residues. A Phosphoserine modification is found at S353. T365 bears the Phosphothreonine mark. Basic and acidic residues predominate over residues 392–403 (GKYERYSRDRYS). Residues 408–422 (RSPSVQHSRSRQSPS) show a composition bias toward low complexity. The segment covering 444 to 468 (TTVSSTPSHTTRTSKRASGTGTSGD) has biased composition (polar residues). Low complexity predominate over residues 473–484 (SPRTSSRYMESS). A phosphoserine mark is found at S487 and S492. Over residues 495–508 (HHYHHRRSPRMRQR) the composition is skewed to basic residues. Residues 518-533 (PSSASSESSASRSRSP) show a composition bias toward low complexity. Phosphoserine is present on S553. Disordered stretches follow at residues 574–661 (ERQE…ADVP) and 675–782 (PFSA…QRPV). Residues 586–603 (GALTINDNSSSVDGNTPN) show a composition bias toward polar residues. The span at 609 to 623 (SAPGSGTPAAASTTS) shows a compositional bias: low complexity. Composition is skewed to polar residues over residues 644–656 (NKQN…NPAS) and 721–731 (VTSSGSANKSV). A phosphoserine mark is found at S730, S743, S747, and S755. Acidic residues predominate over residues 746-760 (LSGDDDVIDSPEDFD). Residues 804-1098 (FEMIAQIGEG…AEDALRSPWL (295 aa)) enclose the Protein kinase domain. ATP contacts are provided by residues 810-818 (IGEGTYGQV), K833, and 891-896 (EYMDHD). D936 acts as the Proton acceptor in catalysis. H1118 provides a ligand contact to ATP.

Belongs to the protein kinase superfamily. CMGC Ser/Thr protein kinase family. CDC2/CDKX subfamily. As to quaternary structure, interacts with cyclin CycK.

The protein resides in the nucleus. The protein localises to the chromosome. The catalysed reaction is [DNA-directed RNA polymerase] + ATP = phospho-[DNA-directed RNA polymerase] + ADP + H(+). The enzyme catalyses L-seryl-[protein] + ATP = O-phospho-L-seryl-[protein] + ADP + H(+). It carries out the reaction L-threonyl-[protein] + ATP = O-phospho-L-threonyl-[protein] + ADP + H(+). In terms of biological role, cyclin-dependent kinase which displays CTD kinase activity: hyperphosphorylates the C-terminal heptapeptide repeat domain (CTD) of the largest RNA polymerase II subunit, thereby acting as a key regulator of transcription elongation. This is Cyclin-dependent kinase 12 (Cdk12) from Drosophila melanogaster (Fruit fly).